Here is a 291-residue protein sequence, read N- to C-terminus: Protease HtpX homolog (291 aa).

Transmembrane regions (helical) follow at residues 11–31 (INTFLILFVFILACGGFGLLA) and 34–54 (FLGMSFFLFILLLAAGYACVQ). Residue H140 coordinates Zn(2+). Residue E141 is part of the active site. Position 144 (H144) interacts with Zn(2+). The next 2 helical transmembrane spans lie at 155–175 (IVFGLVSAVGLISDMVLRALI) and 186–206 (AFSFAIVLFFSLLAPIAAMLV). E215 serves as a coordination point for Zn(2+).

Belongs to the peptidase M48B family. It depends on Zn(2+) as a cofactor.

Its subcellular location is the cell membrane. This is Protease HtpX homolog from Tropheryma whipplei (strain TW08/27) (Whipple's bacillus).